A 331-amino-acid polypeptide reads, in one-letter code: DNA polymerase IV (331 aa).

In terms of domain architecture, UmuC spans 1 to 174 (FFAAVEMRDN…LPLAKIPGVG (174 aa)). Aspartate 92 contacts Mg(2+). The active site involves glutamate 93.

The protein belongs to the DNA polymerase type-Y family. Monomer. Mg(2+) serves as cofactor.

It localises to the cytoplasm. It catalyses the reaction DNA(n) + a 2'-deoxyribonucleoside 5'-triphosphate = DNA(n+1) + diphosphate. Its function is as follows. Poorly processive, error-prone DNA polymerase involved in untargeted mutagenesis. Copies undamaged DNA at stalled replication forks, which arise in vivo from mismatched or misaligned primer ends. These misaligned primers can be extended by PolIV. Exhibits no 3'-5' exonuclease (proofreading) activity. May be involved in translesional synthesis, in conjunction with the beta clamp from PolIII. The polypeptide is DNA polymerase IV (Escherichia fergusonii).